We begin with the raw amino-acid sequence, 224 residues long: MSIRDWPEAERPREKLLEQGAAALSDAELLAIFLRTGVTGCSAVELSRRLLSEFGGLRALLEADLASFCGHLGLGVAKYAQLQAVLEMGRRHLAERLRRDSILESPQAVRDYLKARLRHEQHEVFACLFLDTRHRVLAFEVLFQGSIDGASVYPRQVVKRTLAHNAAALILTHNHPSGDARPSLADRQLTARLKEALALIDVRVLDHFIIGDGEPLSLAEYGWL.

The 123-residue stretch at 102–224 (ILESPQAVRD…PLSLAEYGWL (123 aa)) folds into the MPN domain. Zn(2+)-binding residues include His173, His175, and Asp186. A JAMM motif motif is present at residues 173 to 186 (HNHPSGDARPSLAD).

It belongs to the UPF0758 family.

This Pseudomonas aeruginosa (strain LESB58) protein is UPF0758 protein PLES_57141.